Here is a 96-residue protein sequence, read N- to C-terminus: MKGNEEHDIQKELKRYELFFKKRYKVLYTVNDFIIGAMFLVGSFFFFYDRLMSAGIWLFAIGSLLLLIRPTIRLIHDFHYRKHVEQQFKHQSSTDD.

2 consecutive transmembrane segments (helical) span residues 27-47 (LYTV…FFFF) and 52-72 (MSAG…RPTI).

The protein resides in the cell membrane. This is an uncharacterized protein from Bacillus subtilis (strain 168).